The chain runs to 290 residues: UDP-N-acetylenolpyruvoylglucosamine reductase (290 aa).

One can recognise an FAD-binding PCMH-type domain in the interval 20–187 (GVGGESEMWF…SRVRLKLRPS (168 aa)). The active site involves R167.

Belongs to the MurB family. FAD is required as a cofactor.

Its subcellular location is the cytoplasm. It catalyses the reaction UDP-N-acetyl-alpha-D-muramate + NADP(+) = UDP-N-acetyl-3-O-(1-carboxyvinyl)-alpha-D-glucosamine + NADPH + H(+). It functions in the pathway cell wall biogenesis; peptidoglycan biosynthesis. Cell wall formation. This is UDP-N-acetylenolpyruvoylglucosamine reductase from Deinococcus radiodurans (strain ATCC 13939 / DSM 20539 / JCM 16871 / CCUG 27074 / LMG 4051 / NBRC 15346 / NCIMB 9279 / VKM B-1422 / R1).